We begin with the raw amino-acid sequence, 596 residues long: ATP-dependent lipid A-core flippase (596 aa).

The next 6 helical transmembrane spans lie at 34 to 54, 80 to 100, 138 to 158, 164 to 184, 263 to 283, and 292 to 312; these read VWVL…EAGI, AAVV…GYLL, AVVF…ITLV, VVFL…IVAI, QPLT…IAVV, and VGGF…LKHL. The ABC transmembrane type-1 domain occupies 38–321; sequence VAGVLAMAAV…LMDVNQPLQR (284 aa). The region spanning 353 to 589 is the ABC transporter domain; it reads IEFSHVSFSY…GGLYAHLHRI (237 aa). 389 to 396 contacts ATP; that stretch reads GPSGSGKT.

It belongs to the ABC transporter superfamily. Lipid exporter (TC 3.A.1.106) family. Homodimer.

It is found in the cell inner membrane. The enzyme catalyses ATP + H2O + lipid A-core oligosaccharideSide 1 = ADP + phosphate + lipid A-core oligosaccharideSide 2.. Involved in lipopolysaccharide (LPS) biosynthesis. Translocates lipid A-core from the inner to the outer leaflet of the inner membrane. Transmembrane domains (TMD) form a pore in the inner membrane and the ATP-binding domain (NBD) is responsible for energy generation. In Burkholderia thailandensis (strain ATCC 700388 / DSM 13276 / CCUG 48851 / CIP 106301 / E264), this protein is ATP-dependent lipid A-core flippase.